The sequence spans 185 residues: Signal peptidase I P (185 aa).

The Cytoplasmic segment spans residues 1 to 14; it reads MFDKEKRKKSNIID. A helical membrane pass occupies residues 15–34; sequence WIKAILIALILVFLVRTFLF. The Extracellular portion of the chain corresponds to 35-185; it reads EPYIVQGESM…FPLDRIRHAK (151 aa). Residues serine 43 and lysine 85 contribute to the active site.

It belongs to the peptidase S26 family.

It is found in the cell membrane. It carries out the reaction Cleavage of hydrophobic, N-terminal signal or leader sequences from secreted and periplasmic proteins.. This is Signal peptidase I P (sipP) from Bacillus subtilis subsp. natto.